Reading from the N-terminus, the 379-residue chain is Pectin lyase B (379 aa).

Positions 1–19 are cleaved as a signal peptide; that stretch reads MRLHAPILSLLAAAASTSA. 2 disulfide bridges follow: Cys82-Cys101 and Cys91-Cys225. The N-linked (GlcNAc...) asparagine glycan is linked to Asn128. Arg255 is a catalytic residue. Residues Cys322 and Cys330 are joined by a disulfide bond.

Belongs to the polysaccharide lyase 1 family.

The protein resides in the secreted. The enzyme catalyses Eliminative cleavage of (1-&gt;4)-alpha-D-galacturonan methyl ester to give oligosaccharides with 4-deoxy-6-O-methyl-alpha-D-galact-4-enuronosyl groups at their non-reducing ends.. Its function is as follows. Pectinolytic enzymes consist of four classes of enzymes: pectin lyase, polygalacturonase, pectin methylesterase and rhamnogalacturonase. Among pectinolytic enzymes, pectin lyase is the most important in depolymerization of pectin, since it cleaves internal glycosidic bonds of highly methylated pectins. The chain is Pectin lyase B (pelB) from Emericella nidulans (strain FGSC A4 / ATCC 38163 / CBS 112.46 / NRRL 194 / M139) (Aspergillus nidulans).